The sequence spans 101 residues: DNA-binding protein Fis (101 aa).

The H-T-H motif DNA-binding region spans 77–96; sequence QTRAANMLGINRGTLRKKLK.

This sequence belongs to the transcriptional regulatory Fis family. As to quaternary structure, homodimer.

In terms of biological role, activates ribosomal RNA transcription. Plays a direct role in upstream activation of rRNA promoters. This Shewanella sediminis (strain HAW-EB3) protein is DNA-binding protein Fis.